We begin with the raw amino-acid sequence, 189 residues long: Probable nicotinate-nucleotide adenylyltransferase (189 aa).

Belongs to the NadD family.

The enzyme catalyses nicotinate beta-D-ribonucleotide + ATP + H(+) = deamido-NAD(+) + diphosphate. Its pathway is cofactor biosynthesis; NAD(+) biosynthesis; deamido-NAD(+) from nicotinate D-ribonucleotide: step 1/1. Catalyzes the reversible adenylation of nicotinate mononucleotide (NaMN) to nicotinic acid adenine dinucleotide (NaAD). This Bacillus cereus (strain Q1) protein is Probable nicotinate-nucleotide adenylyltransferase.